A 332-amino-acid chain; its full sequence is Trans-2'-carboxybenzalpyruvate hydratase-aldolase (332 aa).

Lys-178 acts as the Schiff-base intermediate with substrate in catalysis.

The protein belongs to the DapA family. In terms of assembly, homotrimer.

The catalysed reaction is (3Z)-4-(2-carboxyphenyl)-2-oxobut-3-enoate + H2O = 2-formylbenzoate + pyruvate. Not inhibited by sodium borohydride or sodium pyruvate. Unaffected by EDTA, EGTA, Mn(2+), Mg(2+) and Ca(2+). Functionally, plays a role in phenanthrene catabolism. Catalyzes the transformation of trans-2'-carboxbenzalpyruvate to 2-formylbenzoate and pyruvate. This is Trans-2'-carboxybenzalpyruvate hydratase-aldolase from Nocardioides sp. (strain KP7).